Reading from the N-terminus, the 278-residue chain is uncharacterized protein (278 aa).

The protein belongs to the short-chain dehydrogenases/reductases (SDR) family.

This is an uncharacterized protein from Bacillus subtilis (strain 168).